A 533-amino-acid polypeptide reads, in one-letter code: Capsid protein VP1 (533 aa).

The interval 333 to 353 (TIDLQQNPVPQTSSSTTDSPQ) is disordered.

Belongs to the microviridae F protein family.

The protein resides in the virion. Its subcellular location is the host cytoplasm. In terms of biological role, assembles to form an icosahedral capsid with a T=1 symmetry. The protein is Capsid protein VP1 of Bdellovibrio bacteriovorus (Bacteriophage phiMH2K).